The following is a 300-amino-acid chain: tRNA dimethylallyltransferase 1 (300 aa).

Gly10–Thr17 is an ATP binding site. Position 12–17 (Thr12–Thr17) interacts with substrate. Residues Asp35–Gln38 are interaction with substrate tRNA.

It belongs to the IPP transferase family. In terms of assembly, monomer. Mg(2+) is required as a cofactor.

The catalysed reaction is adenosine(37) in tRNA + dimethylallyl diphosphate = N(6)-dimethylallyladenosine(37) in tRNA + diphosphate. Catalyzes the transfer of a dimethylallyl group onto the adenine at position 37 in tRNAs that read codons beginning with uridine, leading to the formation of N6-(dimethylallyl)adenosine (i(6)A). This is tRNA dimethylallyltransferase 1 from Phocaeicola vulgatus (strain ATCC 8482 / DSM 1447 / JCM 5826 / CCUG 4940 / NBRC 14291 / NCTC 11154) (Bacteroides vulgatus).